We begin with the raw amino-acid sequence, 474 residues long: tRNA-2-methylthio-N(6)-dimethylallyladenosine synthase (474 aa).

Residues 21 to 138 (ERVYVETQGC…LPQMLARRRS (118 aa)) form the MTTase N-terminal domain. The [4Fe-4S] cluster site is built by C30, C67, C101, C175, C179, and C182. A Radical SAM core domain is found at 161-395 (RAEGPTAYVS…ARLHEQQSAA (235 aa)). Residues 397–460 (RALLGTRQSV…THSLRGRVVS (64 aa)) enclose the TRAM domain.

Belongs to the methylthiotransferase family. MiaB subfamily. In terms of assembly, monomer. It depends on [4Fe-4S] cluster as a cofactor.

Its subcellular location is the cytoplasm. The catalysed reaction is N(6)-dimethylallyladenosine(37) in tRNA + (sulfur carrier)-SH + AH2 + 2 S-adenosyl-L-methionine = 2-methylsulfanyl-N(6)-dimethylallyladenosine(37) in tRNA + (sulfur carrier)-H + 5'-deoxyadenosine + L-methionine + A + S-adenosyl-L-homocysteine + 2 H(+). Its function is as follows. Catalyzes the methylthiolation of N6-(dimethylallyl)adenosine (i(6)A), leading to the formation of 2-methylthio-N6-(dimethylallyl)adenosine (ms(2)i(6)A) at position 37 in tRNAs that read codons beginning with uridine. The chain is tRNA-2-methylthio-N(6)-dimethylallyladenosine synthase from Halorhodospira halophila (strain DSM 244 / SL1) (Ectothiorhodospira halophila (strain DSM 244 / SL1)).